The sequence spans 175 residues: Transcriptional repressor NrdR (175 aa).

A zinc finger spans residues 3 to 34; that stretch reads CPICQDTNSRVLESRSAESGKSIRRRRECMNC. Positions 49–139 constitute an ATP-cone domain; that stretch reads ITIIKRDGKK…VYRKFQGIRD (91 aa).

This sequence belongs to the NrdR family. The cofactor is Zn(2+).

Negatively regulates transcription of bacterial ribonucleotide reductase nrd genes and operons by binding to NrdR-boxes. This chain is Transcriptional repressor NrdR, found in Trichodesmium erythraeum (strain IMS101).